The chain runs to 173 residues: Archaemetzincin (173 aa).

A Zn(2+)-binding site is contributed by His130. Glu131 (proton acceptor) is an active-site residue. Residues His134, His140, Cys141, Cys146, Cys165, and Cys168 each coordinate Zn(2+).

Belongs to the peptidase M54 family. As to quaternary structure, monomer. Zn(2+) serves as cofactor.

Its function is as follows. Probable zinc metalloprotease whose natural substrate is unknown. This chain is Archaemetzincin, found in Haloquadratum walsbyi (strain DSM 16790 / HBSQ001).